Reading from the N-terminus, the 454-residue chain is Tumor necrosis factor receptor superfamily member 1A (454 aa).

A signal peptide spans 1 to 29; that stretch reads MGLPTVPGLLLSLVLLALLMGIHPSGVTG. Topologically, residues 30 to 212 are extracellular; sequence LVPSLGDREK…VTNPQDSGTA (183 aa). TNFR-Cys repeat units follow at residues 43 to 82, 83 to 125, 126 to 166, and 167 to 196; these read LCPQ…TVCR, ECEK…DTVC, GCKE…NTVC, and NCHA…KLCL. Intrachain disulfides connect C44/C58, C59/C72, C62/C81, C84/C99, C102/C117, C105/C125, C127/C143, C146/C158, C149/C166, C168/C179, C182/C195, and C185/C191. Residue N54 is glycosylated (N-linked (GlcNAc...) asparagine). An N-linked (GlcNAc...) asparagine glycan is attached at N151. An N-linked (GlcNAc...) asparagine glycan is attached at N202. Residues 213–235 form a helical membrane-spanning segment; that stretch reads VLLPLVILLGLCLLSFIFISLMC. Residues 236-454 lie on the Cytoplasmic side of the membrane; that stretch reads RYPRWRPEVY…APSSTTRLPR (219 aa). Residues 339 to 349 are N-SMase activation domain (NSD); the sequence is VQKWEDSAHPQ. Positions 356-441 constitute a Death domain; that stretch reads LAILYAVVDG…GCLENILEAL (86 aa). A (Microbial infection) N-beta-linked (GlcNAc) arginine glycan is attached at R376.

As to quaternary structure, binding of TNF to the extracellular domain leads to homotrimerization. The aggregated death domains provide a novel molecular interface that interacts specifically with the death domain of TRADD. Various TRADD-interacting proteins such as TRAFS, RIPK1 and possibly FADD, are recruited to the complex by their association with TRADD. This complex activates at least two distinct signaling cascades, apoptosis and NF-kappa-B signaling. Interacts with BAG4, BABAM2, FEM1B, GRB2, SQSTM1 and TRPC4AP. Interacts with DAB2IP. Interacts directly with NOL3 (via CARD domain); inhibits TNF-signaling pathway. Interacts with SH3RF2, TRADD and RIPK1. SH3RF2 facilitates the recruitment of RIPK1 and TRADD to TNFRSF1A in a TNF-alpha-dependent process. Interacts with PGLYRP1; this interaction is important for cell death induction. Interacts (via death domain) with MADD (via death domain). Post-translationally, (Microbial infection) Glycosylated at Arg-376 by S.typhimurium protein Ssek3: arginine GlcNAcylation prevents homotypic/heterotypic death domain interactions.

It is found in the cell membrane. The protein localises to the golgi apparatus membrane. Receptor for TNFSF2/TNF-alpha and homotrimeric TNFSF1/lymphotoxin-alpha. The adapter molecule FADD recruits caspase-8 to the activated receptor. The resulting death-inducing signaling complex (DISC) performs caspase-8 proteolytic activation which initiates the subsequent cascade of caspases (aspartate-specific cysteine proteases) mediating apoptosis. In Mus musculus (Mouse), this protein is Tumor necrosis factor receptor superfamily member 1A (Tnfrsf1a).